Reading from the N-terminus, the 75-residue chain is Molt-inhibiting hormone (75 aa).

3 cysteine pairs are disulfide-bonded: Cys7/Cys44, Cys24/Cys40, and Cys27/Cys53. An Alanine amide modification is found at Ala75.

This sequence belongs to the arthropod CHH/MIH/GIH/VIH hormone family.

The protein localises to the secreted. Functionally, inhibits Y-organs where molting hormone (ecdysteroid) is secreted. A molting cycle is initiated when MIH secretion diminishes or stops. This Procambarus clarkii (Red swamp crayfish) protein is Molt-inhibiting hormone.